Reading from the N-terminus, the 233-residue chain is Cytochrome c oxidase subunit 3 (233 aa).

4 consecutive transmembrane segments (helical) span residues 62-82 (VVLF…AYLI), 98-118 (LELL…FVMH), 135-155 (WFGI…YEYF), and 172-192 (VLTG…LSVL).

Belongs to the cytochrome c oxidase subunit 3 family.

It is found in the cell membrane. The enzyme catalyses 4 Fe(II)-[cytochrome c] + O2 + 8 H(+)(in) = 4 Fe(III)-[cytochrome c] + 2 H2O + 4 H(+)(out). The polypeptide is Cytochrome c oxidase subunit 3 (ctaE) (Synechocystis sp. (strain ATCC 27184 / PCC 6803 / Kazusa)).